A 475-amino-acid polypeptide reads, in one-letter code: Ribulose bisphosphate carboxylase large chain (475 aa).

Residues 1–2 (MS) constitute a propeptide that is removed on maturation. Position 3 is an N-acetylproline (proline 3). Residue lysine 14 is modified to N6,N6,N6-trimethyllysine. Asparagine 123 and threonine 173 together coordinate substrate. Lysine 175 acts as the Proton acceptor in catalysis. Substrate is bound at residue lysine 177. Residues lysine 201, aspartate 203, and glutamate 204 each contribute to the Mg(2+) site. Lysine 201 carries the post-translational modification N6-carboxylysine. The active-site Proton acceptor is the histidine 294. Positions 295, 327, and 379 each coordinate substrate.

Belongs to the RuBisCO large chain family. Type I subfamily. Heterohexadecamer of 8 large chains and 8 small chains; disulfide-linked. The disulfide link is formed within the large subunit homodimers. It depends on Mg(2+) as a cofactor. The disulfide bond which can form in the large chain dimeric partners within the hexadecamer appears to be associated with oxidative stress and protein turnover.

It localises to the plastid. It is found in the chloroplast. The enzyme catalyses 2 (2R)-3-phosphoglycerate + 2 H(+) = D-ribulose 1,5-bisphosphate + CO2 + H2O. It catalyses the reaction D-ribulose 1,5-bisphosphate + O2 = 2-phosphoglycolate + (2R)-3-phosphoglycerate + 2 H(+). RuBisCO catalyzes two reactions: the carboxylation of D-ribulose 1,5-bisphosphate, the primary event in carbon dioxide fixation, as well as the oxidative fragmentation of the pentose substrate in the photorespiration process. Both reactions occur simultaneously and in competition at the same active site. In Cedrus deodara (Deodar cedar), this protein is Ribulose bisphosphate carboxylase large chain.